A 269-amino-acid polypeptide reads, in one-letter code: GTP cyclohydrolase FolE2 (269 aa).

It belongs to the GTP cyclohydrolase IV family.

It catalyses the reaction GTP + H2O = 7,8-dihydroneopterin 3'-triphosphate + formate + H(+). It functions in the pathway cofactor biosynthesis; 7,8-dihydroneopterin triphosphate biosynthesis; 7,8-dihydroneopterin triphosphate from GTP: step 1/1. Converts GTP to 7,8-dihydroneopterin triphosphate. The sequence is that of GTP cyclohydrolase FolE2 from Azoarcus sp. (strain BH72).